We begin with the raw amino-acid sequence, 268 residues long: MTDQHAFATEQVQLDPTLSPTTEETTHFGFKTVAKSEKQKMVANVFHSVAGKYDLMNDLLSFGIHRVWKRFTIDCSGVRKGHKVLDLAGGTGDFTAKFSRLVGPSGEVILADINDSMLRVGREKLRNLGVVGNVNYVQANAEALPFPDNTFDCVIISFGLRNVTDKDKALRSMFRVLKPGGRLLVLEFSKPILDPLSKIYNFYSFNILPKIGEVVVNDSESYRYLAESIRMHPAQDVLKQMMIDAGFEQVNYYNLSAGIVALHRGYKF.

Residues 1–23 (MTDQHAFATEQVQLDPTLSPTTE) form a disordered region. Residues 10-23 (EQVQLDPTLSPTTE) show a composition bias toward polar residues. S-adenosyl-L-methionine is bound by residues Thr-91, Asp-112, 140–141 (NA), and Ser-157.

This sequence belongs to the class I-like SAM-binding methyltransferase superfamily. MenG/UbiE family.

The catalysed reaction is a 2-demethylmenaquinol + S-adenosyl-L-methionine = a menaquinol + S-adenosyl-L-homocysteine + H(+). It catalyses the reaction a 2-methoxy-6-(all-trans-polyprenyl)benzene-1,4-diol + S-adenosyl-L-methionine = a 5-methoxy-2-methyl-3-(all-trans-polyprenyl)benzene-1,4-diol + S-adenosyl-L-homocysteine + H(+). It functions in the pathway quinol/quinone metabolism; menaquinone biosynthesis; menaquinol from 1,4-dihydroxy-2-naphthoate: step 2/2. Its pathway is cofactor biosynthesis; ubiquinone biosynthesis. Functionally, methyltransferase required for the conversion of demethylmenaquinol (DMKH2) to menaquinol (MKH2) and the conversion of 2-polyprenyl-6-methoxy-1,4-benzoquinol (DDMQH2) to 2-polyprenyl-3-methyl-6-methoxy-1,4-benzoquinol (DMQH2). The protein is Ubiquinone/menaquinone biosynthesis C-methyltransferase UbiE of Pasteurella multocida (strain Pm70).